We begin with the raw amino-acid sequence, 260 residues long: Small ribosomal subunit protein uS2 (260 aa).

Belongs to the universal ribosomal protein uS2 family.

The chain is Small ribosomal subunit protein uS2 from Gluconacetobacter diazotrophicus (strain ATCC 49037 / DSM 5601 / CCUG 37298 / CIP 103539 / LMG 7603 / PAl5).